Reading from the N-terminus, the 231-residue chain is Flagellar L-ring protein (231 aa).

The signal sequence occupies residues 1-18 (MNRLLSVFALGGAVLLAG). Cysteine 19 is lipidated: N-palmitoyl cysteine. The S-diacylglycerol cysteine moiety is linked to residue cysteine 19.

It belongs to the FlgH family. As to quaternary structure, the basal body constitutes a major portion of the flagellar organelle and consists of four rings (L,P,S, and M) mounted on a central rod.

It localises to the cell outer membrane. The protein resides in the bacterial flagellum basal body. In terms of biological role, assembles around the rod to form the L-ring and probably protects the motor/basal body from shearing forces during rotation. The protein is Flagellar L-ring protein of Pseudomonas putida (strain GB-1).